Reading from the N-terminus, the 609-residue chain is Protein alan shepard (609 aa).

Positions 1–12 are enriched in pro residues; that stretch reads MHPRYSPAPPPL. The disordered stretch occupies residues 1–96; it reads MHPRYSPAPP…ASVAAAPPTP (96 aa). Phosphotyrosine is present on Y5. Residues 13–35 are compositionally biased toward low complexity; it reads HQQQQQQPPQQQQQQMGGPHQQQ. Residues 37-50 are compositionally biased toward gly residues; sequence GGVGPGTGHGGVGA. 2 stretches are compositionally biased toward low complexity: residues 51-68 and 83-92; these read AVGASNAGHMRAPPNSQQ and SSSAASVAAA. Phosphotyrosine is present on residues Y152 and Y168. The interval 190–252 is disordered; it reads PATTTYGQRV…AQNQNQQGGE (63 aa). The segment covering 204–252 has biased composition (low complexity); that stretch reads SPSNTNSSSSSNTGSQSGTLSTSLSNTTNTNTTMGPNGTAQNQNQQGGE. RRM domains follow at residues 257-330 and 336-415; these read TNLY…MAKQ and TNLY…FADG. The tract at residues 583–609 is disordered; it reads MTDSEQASTAASPDEAYTQYPHQAAPK.

Its function is as follows. Has a role in the perception of gravity. The protein is Protein alan shepard of Drosophila grimshawi (Hawaiian fruit fly).